We begin with the raw amino-acid sequence, 235 residues long: Phosphoribosylaminoimidazole-succinocarboxamide synthase (235 aa).

This sequence belongs to the SAICAR synthetase family.

The catalysed reaction is 5-amino-1-(5-phospho-D-ribosyl)imidazole-4-carboxylate + L-aspartate + ATP = (2S)-2-[5-amino-1-(5-phospho-beta-D-ribosyl)imidazole-4-carboxamido]succinate + ADP + phosphate + 2 H(+). It functions in the pathway purine metabolism; IMP biosynthesis via de novo pathway; 5-amino-1-(5-phospho-D-ribosyl)imidazole-4-carboxamide from 5-amino-1-(5-phospho-D-ribosyl)imidazole-4-carboxylate: step 1/2. The chain is Phosphoribosylaminoimidazole-succinocarboxamide synthase from Prosthecochloris aestuarii (strain DSM 271 / SK 413).